Here is a 480-residue protein sequence, read N- to C-terminus: Gasdermin-C3 (480 aa).

A triggers pyroptosis region spans residues 1 to 226 (MGYSFDRASK…TCVILPSATK (226 aa)).

Belongs to the gasdermin family. As to quaternary structure, homooligomer; homooligomeric ring-shaped pore complex containing 27-28 subunits when inserted in the membrane. Post-translationally, cleavage by CASP8 relieves autoinhibition by releasing the N-terminal moiety (Gasdermin-C3, N-terminal) that initiates pyroptosis. Palmitoylated.

The protein localises to the cytoplasm. Its subcellular location is the cytosol. The protein resides in the cell membrane. With respect to regulation, the full-length protein before cleavage is inactive: intramolecular interactions between N- and C-terminal domains mediate autoinhibition in the absence of activation signal. The intrinsic pyroptosis-inducing activity is carried by the released N-terminal moiety (Gasdermin-C3, N-terminal) following cleavage by caspase CASP8. Its function is as follows. This form constitutes the precursor of the pore-forming protein: upon cleavage, the released N-terminal moiety (Gasdermin-C3, N-terminal) binds to membranes and forms pores, triggering pyroptosis. Functionally, pore-forming protein that causes membrane permeabilization and pyroptosis. Produced by the cleavage of gasdermin-C3 by caspase CASP8 in response to death signals. After cleavage, moves to the plasma membrane where it strongly binds to membrane inner leaflet lipids. Homooligomerizes within the membrane and forms pores of 10-15 nanometers (nm) of inner diameter, triggering pyroptosis. This is Gasdermin-C3 from Mus musculus (Mouse).